The sequence spans 268 residues: Nickel import ATP-binding protein NikE (268 aa).

Residues 4–252 (LNVSGLSHHY…SSDAGRVLQN (249 aa)) enclose the ABC transporter domain. 45–52 (GRSGCGKS) provides a ligand contact to ATP.

This sequence belongs to the ABC transporter superfamily. Nickel importer (TC 3.A.1.5.3) family. As to quaternary structure, the complex is composed of two ATP-binding proteins (NikD and NikE), two transmembrane proteins (NikB and NikC) and a solute-binding protein (NikA).

The protein localises to the cell inner membrane. It carries out the reaction Ni(2+)(out) + ATP + H2O = Ni(2+)(in) + ADP + phosphate + H(+). Part of the ABC transporter complex NikABCDE involved in nickel import. Responsible for energy coupling to the transport system. In Shigella boydii serotype 4 (strain Sb227), this protein is Nickel import ATP-binding protein NikE.